Reading from the N-terminus, the 99-residue chain is Translation initiation factor 1A (99 aa).

Residues 11-84 (RRVRTPRRGE…EKADIVWRYT (74 aa)) form the S1-like domain.

Belongs to the eIF-1A family.

In terms of biological role, seems to be required for maximal rate of protein biosynthesis. Enhances ribosome dissociation into subunits and stabilizes the binding of the initiator Met-tRNA(I) to 40 S ribosomal subunits. The protein is Translation initiation factor 1A (eIF1A) of Methanothermobacter thermautotrophicus (strain ATCC 29096 / DSM 1053 / JCM 10044 / NBRC 100330 / Delta H) (Methanobacterium thermoautotrophicum).